The sequence spans 562 residues: Protein wntless (562 aa).

The Cytoplasmic portion of the chain corresponds to 1 to 13 (MSGTILENLSGRK). A helical membrane pass occupies residues 14–34 (LSILVSSLLLCQVACFLIGGL). Residues 35–239 (YAPVPAGHQI…AIHQNGGFTQ (205 aa)) lie on the Lumenal side of the membrane. N-linked (GlcNAc...) asparagine glycans are attached at residues Asn-58 and Asn-103. A helical transmembrane segment spans residues 240 to 260 (VWLLLKSVLFPFIIGIMVWFW). Residues 261 to 270 (RRVHILQRSP) lie on the Cytoplasmic side of the membrane. The helical transmembrane segment at 271–291 (ALLEYMLLYLGGALSFLNLPL) threads the bilayer. Residues 292-311 (EYLTLSFEMPYMLLLSDVRQ) are Lumenal-facing. A helical transmembrane segment spans residues 312–332 (GIFYAMLLSFWLVFAGEHMLI). Residues 333-344 (QDSPNKSTIRSR) lie on the Cytoplasmic side of the membrane. A helical membrane pass occupies residues 345–365 (YWKHLSAVVVGCISLFVFDIC). At 366–390 (ERGMQLRNPFYSIWTTPLGAKVAMS) the chain is on the lumenal side. The helical transmembrane segment at 391-411 (FIVLAGVSAGIYFLFLCYMVW) threads the bilayer. The Cytoplasmic segment spans residues 412–441 (KVFKDIGDKRTSLPSMSQARRLHYEGLIYR). Residues 442–462 (FKFLMLATLLCAGLTVAGFIM) traverse the membrane as a helical segment. At 463–482 (GQMAEGHWKWNEDIEIQLTS) the chain is on the lumenal side. The chain crosses the membrane as a helical span at residues 483–503 (AFLTGVYGMWNIYIFALLILY). At 504–562 (APSHKQWPTMRHSDETTQSNENIVASAASEEIEFSNLPSDSNPSEISSLTSFTRKVAFD) the chain is on the cytoplasmic side. A disordered region spans residues 538 to 562 (SNLPSDSNPSEISSLTSFTRKVAFD). The span at 539–556 (NLPSDSNPSEISSLTSFT) shows a compositional bias: polar residues.

The protein belongs to the wntless family. As to quaternary structure, interacts with wg; in the Golgi. Interacts with Vps35, a component of the retromer complex; wls stability is regulated by Vps35.

The protein resides in the presynaptic cell membrane. It is found in the postsynaptic cell membrane. Its subcellular location is the cell membrane. The protein localises to the endoplasmic reticulum membrane. It localises to the endosome membrane. The protein resides in the golgi apparatus membrane. Functionally, a segment polarity gene required for wingless (wg)-dependent patterning processes, acting in both wg-sending cells and wg-target cells. In non-neuronal cells wls directs wg secretion. The wls traffic loop encompasses the Golgi, the cell surface, an endocytic compartment and a retrograde route leading back to the Golgi, and involves clathrin-mediated endocytosis and the retromer complex (a conserved protein complex consisting of Vps35 and Vps26). In neuronal cells (the larval motorneuron NMJ), the wg signal moves across the synapse via the release of wls-containing exosome-like vesicles. Postsynaptic wls is required for the trafficking of fz2 through the fz2-interacting protein Grip. This is Protein wntless from Drosophila mojavensis (Fruit fly).